Here is a 162-residue protein sequence, read N- to C-terminus: Protein S40-4 (162 aa).

The protein belongs to the senescence regulator S40 family.

It localises to the cytoplasm. The protein is Protein S40-4 of Arabidopsis thaliana (Mouse-ear cress).